A 251-amino-acid chain; its full sequence is Imidazole glycerol phosphate synthase subunit HisF (251 aa).

Residues D12 and D131 contribute to the active site.

Belongs to the HisA/HisF family. Heterodimer of HisH and HisF.

Its subcellular location is the cytoplasm. The catalysed reaction is 5-[(5-phospho-1-deoxy-D-ribulos-1-ylimino)methylamino]-1-(5-phospho-beta-D-ribosyl)imidazole-4-carboxamide + L-glutamine = D-erythro-1-(imidazol-4-yl)glycerol 3-phosphate + 5-amino-1-(5-phospho-beta-D-ribosyl)imidazole-4-carboxamide + L-glutamate + H(+). The protein operates within amino-acid biosynthesis; L-histidine biosynthesis; L-histidine from 5-phospho-alpha-D-ribose 1-diphosphate: step 5/9. Its function is as follows. IGPS catalyzes the conversion of PRFAR and glutamine to IGP, AICAR and glutamate. The HisF subunit catalyzes the cyclization activity that produces IGP and AICAR from PRFAR using the ammonia provided by the HisH subunit. This chain is Imidazole glycerol phosphate synthase subunit HisF, found in Helicobacter hepaticus (strain ATCC 51449 / 3B1).